We begin with the raw amino-acid sequence, 98 residues long: UPF0235 protein azo3464 (98 aa).

Belongs to the UPF0235 family.

The chain is UPF0235 protein azo3464 from Azoarcus sp. (strain BH72).